Consider the following 328-residue polypeptide: Tetraacyldisaccharide 4'-kinase (328 aa).

59-66 contacts ATP; that stretch reads TAGGNGKT.

Belongs to the LpxK family.

It catalyses the reaction a lipid A disaccharide + ATP = a lipid IVA + ADP + H(+). It functions in the pathway glycolipid biosynthesis; lipid IV(A) biosynthesis; lipid IV(A) from (3R)-3-hydroxytetradecanoyl-[acyl-carrier-protein] and UDP-N-acetyl-alpha-D-glucosamine: step 6/6. Functionally, transfers the gamma-phosphate of ATP to the 4'-position of a tetraacyldisaccharide 1-phosphate intermediate (termed DS-1-P) to form tetraacyldisaccharide 1,4'-bis-phosphate (lipid IVA). The protein is Tetraacyldisaccharide 4'-kinase of Aliivibrio fischeri (strain MJ11) (Vibrio fischeri).